The chain runs to 385 residues: Ethanolamine kinase 2 (385 aa).

Belongs to the choline/ethanolamine kinase family. Expressed in testis and liver. Low expression in ovary and kidney.

The enzyme catalyses ethanolamine + ATP = phosphoethanolamine + ADP + H(+). Its pathway is phospholipid metabolism; phosphatidylethanolamine biosynthesis; phosphatidylethanolamine from ethanolamine: step 1/3. Highly specific for ethanolamine phosphorylation. Does not have choline kinase activity. The sequence is that of Ethanolamine kinase 2 (Etnk2) from Mus musculus (Mouse).